Consider the following 202-residue polypeptide: FMN-dependent NADH:quinone oxidoreductase (202 aa).

FMN contacts are provided by residues S9, 15-17 (SAS), and 94-97 (MYNL).

Belongs to the azoreductase type 1 family. As to quaternary structure, homodimer. FMN serves as cofactor.

It catalyses the reaction 2 a quinone + NADH + H(+) = 2 a 1,4-benzosemiquinone + NAD(+). It carries out the reaction N,N-dimethyl-1,4-phenylenediamine + anthranilate + 2 NAD(+) = 2-(4-dimethylaminophenyl)diazenylbenzoate + 2 NADH + 2 H(+). Its function is as follows. Quinone reductase that provides resistance to thiol-specific stress caused by electrophilic quinones. In terms of biological role, also exhibits azoreductase activity. Catalyzes the reductive cleavage of the azo bond in aromatic azo compounds to the corresponding amines. The polypeptide is FMN-dependent NADH:quinone oxidoreductase (Gluconobacter oxydans (strain 621H) (Gluconobacter suboxydans)).